Here is a 66-residue protein sequence, read N- to C-terminus: Large ribosomal subunit protein uL29 (66 aa).

This sequence belongs to the universal ribosomal protein uL29 family.

The sequence is that of Large ribosomal subunit protein uL29 from Rhizobium etli (strain CIAT 652).